The following is a 206-amino-acid chain: Dephospho-CoA kinase (206 aa).

Positions 4 to 204 constitute a DPCK domain; sequence IVGLTGGIGS…QFYLQQAENK (201 aa). 12–17 is a binding site for ATP; sequence GSGKTT.

The protein belongs to the CoaE family.

Its subcellular location is the cytoplasm. It catalyses the reaction 3'-dephospho-CoA + ATP = ADP + CoA + H(+). Its pathway is cofactor biosynthesis; coenzyme A biosynthesis; CoA from (R)-pantothenate: step 5/5. In terms of biological role, catalyzes the phosphorylation of the 3'-hydroxyl group of dephosphocoenzyme A to form coenzyme A. This is Dephospho-CoA kinase from Haemophilus influenzae (strain ATCC 51907 / DSM 11121 / KW20 / Rd).